The primary structure comprises 257 residues: Pimeloyl-[acyl-carrier protein] methyl ester esterase (257 aa).

The AB hydrolase-1 domain maps to 15–241; the sequence is HLVLLHGWGL…KAAHAPFVSH (227 aa). Substrate is bound by residues tryptophan 22, 82–83, and 143–147; these read SL and FLALQ. The active-site Nucleophile is the serine 82. Residues aspartate 207 and histidine 235 contribute to the active site. Histidine 235 contacts substrate.

Belongs to the AB hydrolase superfamily. Carboxylesterase BioH family. In terms of assembly, monomer.

It localises to the cytoplasm. The catalysed reaction is 6-carboxyhexanoyl-[ACP] methyl ester + H2O = 6-carboxyhexanoyl-[ACP] + methanol + H(+). It participates in cofactor biosynthesis; biotin biosynthesis. In terms of biological role, the physiological role of BioH is to remove the methyl group introduced by BioC when the pimeloyl moiety is complete. It allows to synthesize pimeloyl-ACP via the fatty acid synthetic pathway through the hydrolysis of the ester bonds of pimeloyl-ACP esters. The chain is Pimeloyl-[acyl-carrier protein] methyl ester esterase from Klebsiella pneumoniae subsp. pneumoniae (strain ATCC 700721 / MGH 78578).